Consider the following 230-residue polypeptide: PKHD-type hydroxylase PD_1553 (230 aa).

Residues 78-182 (RTLPPRFNRY…RIASFFWVQS (105 aa)) form the Fe2OG dioxygenase domain. Residues His96, Asp98, and His163 each coordinate Fe cation. Position 173 (Arg173) interacts with 2-oxoglutarate.

Fe(2+) is required as a cofactor. The cofactor is L-ascorbate.

In Xylella fastidiosa (strain Temecula1 / ATCC 700964), this protein is PKHD-type hydroxylase PD_1553.